The following is a 3333-amino-acid chain: Laminin subunit alpha-3 (3333 aa).

An N-terminal signal peptide occupies residues 1–35 (MAAAARPRGRALGPVLPPTPLLLLVLRVLPACGAT). One can recognise a Laminin N-terminal domain in the interval 43 to 298 (AGLSLHPTYF…SIKDISIGGQ (256 aa)). N-linked (GlcNAc...) asparagine glycosylation is found at Asn142 and Asn242. The domain V stretch occupies residues 298-728 (QCVCNGHAEV…NNYYFPDLHH (431 aa)). Disulfide bonds link Cys299–Cys308, Cys301–Cys319, Cys321–Cys330, Cys333–Cys353, Cys356–Cys365, Cys358–Cys390, Cys393–Cys402, Cys405–Cys423, Cys426–Cys436, Cys428–Cys443, Cys445–Cys454, Cys457–Cys467, Cys491–Cys503, Cys493–Cys509, Cys511–Cys520, Cys523–Cys533, Cys536–Cys548, Cys538–Cys555, Cys557–Cys566, Cys569–Cys586, Cys601–Cys610, Cys613–Cys628, Cys631–Cys645, Cys633–Cys652, Cys654–Cys663, Cys666–Cys681, Cys684–Cys696, Cys686–Cys703, and Cys705–Cys714. Laminin EGF-like domains follow at residues 299-355 (CVCN…ECEA), 356-425 (CNCH…GCIP), 426-469 (CSCD…FCLR), 491-535 (CDCN…ICQA), 536-588 (CWCS…ACDP), 590-630 (GTIN…GCSE), 631-683 (CKCH…GCQG), and 684-728 (CQCD…DLHH). Residues 796 to 1265 (TEAVSGHITI…VAFYHKGALP (470 aa)) form a domain IV 1 (domain IV B) region. Cystine bridges form between Cys1266/Cys1278, Cys1268/Cys1285, Cys1287/Cys1296, Cys1299/Cys1309, Cys1312/Cys1319, Cys1314/Cys1326, Cys1328/Cys1337, Cys1340/Cys1353, Cys1356/Cys1371, Cys1358/Cys1378, Cys1380/Cys1389, Cys1392/Cys1402, Cys1405/Cys1417, Cys1407/Cys1424, Cys1426/Cys1435, and Cys1438/Cys1453. 4 Laminin EGF-like domains span residues 1266 to 1311 (CECH…RCKP), 1312 to 1355 (CSCG…GCEG), 1356 to 1404 (CNCS…ECVP), and 1405 to 1455 (CNCN…GCTS). The tract at residues 1266-1465 (CECHPTGATG…CFCFGVNNQC (200 aa)) is domain III B. In terms of domain architecture, Laminin IV type A spans 1476–1653 (VDMLGWHLET…SGRIALAVEI (178 aa)). The segment at 1654–1821 (CACPPAYAGD…DSSPAEECDD (168 aa)) is domain III A. 8 disulfide bridges follow: Cys1687-Cys1696, Cys1689-Cys1703, Cys1706-Cys1715, Cys1718-Cys1731, Cys1734-Cys1746, Cys1736-Cys1755, Cys1757-Cys1766, and Cys1769-Cys1784. 2 Laminin EGF-like domains span residues 1687 to 1733 (CNCN…SCRA) and 1734 to 1786 (CPCP…SCQP). The region spanning 1787-1821 (CSCNSNGQLGSCHPLTGDCINQEPKDSSPAEECDD) is the Laminin EGF-like 15; truncated domain. The tract at residues 1822–2389 (CDSCVMTLLN…ARDAASKVAV (568 aa)) is domain II and I. 2 coiled-coil regions span residues 1852–1941 (ASAG…KNVI) and 1987–2169 (KHLR…DELV). The Cell attachment site signature appears at 2278 to 2280 (RGD). The stretch at 2322–2388 (RTQNEDFKKA…QARDAASKVA (67 aa)) forms a coiled coil. N-linked (GlcNAc...) asparagine glycans are attached at residues Asn2365, Asn2502, and Asn2584. Laminin G-like domains lie at 2390–2591 (PMRF…VEPC), 2598–2760 (SDKN…TKKC), 2767–2927 (VRSA…LGGC), 2986–3150 (ALQF…VSSC), and 3157–3330 (KGIY…LNGC). 5 disulfides stabilise this stretch: Cys2561/Cys2591, Cys2737/Cys2760, Cys2895/Cys2927, Cys3127/Cys3150, and Cys3302/Cys3330.

As to quaternary structure, laminin is a complex glycoprotein, consisting of three different polypeptide chains (alpha, beta, gamma), which are bound to each other by disulfide bonds into a cross-shaped molecule comprising one long and three short arms with globules at each end. Alpha-3 is a subunit of laminin-5 (laminin-332 or epiligrin/kalinin/nicein), laminin-6 (laminin-311 or K-laminin) and laminin-7 (laminin-321 or KS-laminin). In terms of tissue distribution, skin; respiratory, urinary, and digestive epithelia and in other specialized tissues with prominent secretory or protective functions. Epithelial basement membrane, and epithelial cell tongue that migrates into a wound bed. A differential and focal expression of the subunit alpha-3 is observed in the CNS.

It is found in the secreted. The protein localises to the extracellular space. Its subcellular location is the extracellular matrix. It localises to the basement membrane. In terms of biological role, binding to cells via a high affinity receptor, laminin is thought to mediate the attachment, migration and organization of cells into tissues during embryonic development by interacting with other extracellular matrix components. Functionally, laminin-5 is thought to be involved in (1) cell adhesion via integrin alpha-3/beta-1 in focal adhesion and integrin alpha-6/beta-4 in hemidesmosomes, (2) signal transduction via tyrosine phosphorylation of pp125-FAK and p80, (3) differentiation of keratinocytes. The protein is Laminin subunit alpha-3 (LAMA3) of Homo sapiens (Human).